A 575-amino-acid polypeptide reads, in one-letter code: GBF-interacting protein 1-like (575 aa).

Disordered stretches follow at residues 66 to 171 and 229 to 296; these read SKRE…SKSD and SSSN…VVHS. Composition is skewed to polar residues over residues 90–102, 115–138, and 161–171; these read FASS…SGRN, TRGS…NETK, and ISASRCSSKSD. Basic and acidic residues predominate over residues 268-281; it reads AREETSTVSEDKDY.

Belongs to the GIP1 family. Expressed in roots, leaves, stems and flowers.

It localises to the nucleus. May act as a transcriptional coactivator of LOB domain-containing proteins. The chain is GBF-interacting protein 1-like from Arabidopsis thaliana (Mouse-ear cress).